A 730-amino-acid polypeptide reads, in one-letter code: Catalase-peroxidase (730 aa).

Residues 1-25 form a disordered region; it reads MEEKKCPVTGHTQHTPTGGGTKNKD. The tryptophyl-tyrosyl-methioninium (Trp-Tyr) (with M-244) cross-link spans 95–218; it reads WHSAGTYRLN…LAAVQMGLIY (124 aa). His-96 serves as the catalytic Proton acceptor. The segment at residues 218 to 244 is a cross-link (tryptophyl-tyrosyl-methioninium (Tyr-Met) (with W-95)); the sequence is YVNPEGPNGQPSVLASGRDVRDTFKRM. His-259 is a heme b binding site.

Belongs to the peroxidase family. Peroxidase/catalase subfamily. As to quaternary structure, homodimer or homotetramer. Requires heme b as cofactor. Post-translationally, formation of the three residue Trp-Tyr-Met cross-link is important for the catalase, but not the peroxidase activity of the enzyme.

It carries out the reaction H2O2 + AH2 = A + 2 H2O. The enzyme catalyses 2 H2O2 = O2 + 2 H2O. Bifunctional enzyme with both catalase and broad-spectrum peroxidase activity. In Desulfitobacterium hafniense (strain Y51), this protein is Catalase-peroxidase.